Reading from the N-terminus, the 411-residue chain is Putative ion-transport protein YfeO (411 aa).

Transmembrane regions (helical) follow at residues 9–29, 54–74, 99–119, 149–169, 186–206, 223–243, 258–278, 296–316, 322–342, 343–363, and 386–406; these read MLLL…VLIA, DSPF…GLII, ALPG…SLGP, ILAS…AALI, LFAP…FFHP, IASG…AVWC, VLIL…GGPL, LGAG…VIAA, GGRI…LHAH, VEAV…VLVV, and LLCI…LLAA.

It belongs to the chloride channel (TC 2.A.49) family.

The protein localises to the cell membrane. The sequence is that of Putative ion-transport protein YfeO from Salmonella agona (strain SL483).